Reading from the N-terminus, the 309-residue chain is MEMO1 family protein C4H3.04c (309 aa).

The protein belongs to the MEMO1 family.

In Schizosaccharomyces pombe (strain 972 / ATCC 24843) (Fission yeast), this protein is MEMO1 family protein C4H3.04c.